The primary structure comprises 217 residues: Probable nicotinate-nucleotide adenylyltransferase (217 aa).

This sequence belongs to the NadD family.

The catalysed reaction is nicotinate beta-D-ribonucleotide + ATP + H(+) = deamido-NAD(+) + diphosphate. It participates in cofactor biosynthesis; NAD(+) biosynthesis; deamido-NAD(+) from nicotinate D-ribonucleotide: step 1/1. In terms of biological role, catalyzes the reversible adenylation of nicotinate mononucleotide (NaMN) to nicotinic acid adenine dinucleotide (NaAD). This chain is Probable nicotinate-nucleotide adenylyltransferase, found in Baumannia cicadellinicola subsp. Homalodisca coagulata.